The following is a 336-amino-acid chain: tRNA N6-adenosine threonylcarbamoyltransferase (336 aa).

Residues H111 and H115 each coordinate Fe cation. Residues 134-138, D167, G180, and N270 contribute to the substrate site; that span reads LVSGG. Residue D298 participates in Fe cation binding.

Belongs to the KAE1 / TsaD family. Fe(2+) serves as cofactor.

The protein localises to the cytoplasm. The enzyme catalyses L-threonylcarbamoyladenylate + adenosine(37) in tRNA = N(6)-L-threonylcarbamoyladenosine(37) in tRNA + AMP + H(+). In terms of biological role, required for the formation of a threonylcarbamoyl group on adenosine at position 37 (t(6)A37) in tRNAs that read codons beginning with adenine. Is involved in the transfer of the threonylcarbamoyl moiety of threonylcarbamoyl-AMP (TC-AMP) to the N6 group of A37, together with TsaE and TsaB. TsaD likely plays a direct catalytic role in this reaction. This is tRNA N6-adenosine threonylcarbamoyltransferase from Acinetobacter baumannii (strain SDF).